Consider the following 147-residue polypeptide: NADH-quinone oxidoreductase subunit A (147 aa).

The next 3 membrane-spanning stretches (helical) occupy residues 16–36 (FAIFLIIAIGLCCLMLVGGWF), 68–88 (FYLVAMFFVIFDVEALYLFAW), and 98–118 (VGFVEAAIFIFVLLAGLVYLV).

It belongs to the complex I subunit 3 family. As to quaternary structure, NDH-1 is composed of 13 different subunits. Subunits NuoA, H, J, K, L, M, N constitute the membrane sector of the complex.

It localises to the cell inner membrane. The catalysed reaction is a quinone + NADH + 5 H(+)(in) = a quinol + NAD(+) + 4 H(+)(out). NDH-1 shuttles electrons from NADH, via FMN and iron-sulfur (Fe-S) centers, to quinones in the respiratory chain. The immediate electron acceptor for the enzyme in this species is believed to be ubiquinone. Couples the redox reaction to proton translocation (for every two electrons transferred, four hydrogen ions are translocated across the cytoplasmic membrane), and thus conserves the redox energy in a proton gradient. The protein is NADH-quinone oxidoreductase subunit A of Citrobacter koseri (strain ATCC BAA-895 / CDC 4225-83 / SGSC4696).